The chain runs to 1280 residues: Clustered mitochondria protein homolog (1280 aa).

Polar residues predominate over residues 1–27; it reads MAASSNDASKSAMANSNVTTEVAQTPS. Disordered regions lie at residues 1 to 49 and 169 to 189; these read MAAS…GQLP and GLDQSGKPKEDGPEQSPLADY. Acidic residues predominate over residues 32-43; it reads VNGEVEATEEDG. The Clu domain maps to 338–582; it reads DLARTQESYL…RLTPLDVAWI (245 aa). 3 disordered regions span residues 633–669, 905–943, and 1214–1280; these read KANKARGGRRRLPKAQKKADAGKEVDGEKKAEAEPEQ, GAAVPTPAAPQTNGSSTSSKKKKNKTITPPRADSPAVSL, and TGRN…TQKP. Residues 635-648 are compositionally biased toward basic residues; it reads NKARGGRRRLPKAQ. Basic and acidic residues predominate over residues 649–669; that stretch reads KKADAGKEVDGEKKAEAEPEQ. Residues 1221–1235 show a composition bias toward low complexity; that stretch reads PAAATPSVSDAAAAA. Residues 1245-1261 are compositionally biased toward basic and acidic residues; sequence VDQRKIEDLLKYIEGES. Residues 1265-1280 are compositionally biased toward basic residues; sequence PTKKRTQNPRKRTQKP.

Belongs to the CLU family. As to quaternary structure, may associate with the eukaryotic translation initiation factor 3 (eIF-3) complex.

The protein resides in the cytoplasm. In terms of biological role, mRNA-binding protein involved in proper cytoplasmic distribution of mitochondria. This Phaeosphaeria nodorum (strain SN15 / ATCC MYA-4574 / FGSC 10173) (Glume blotch fungus) protein is Clustered mitochondria protein homolog.